The following is a 917-amino-acid chain: Auxin response factor 17 (917 aa).

The segment at residues 134 to 236 is a DNA-binding region (TF-B3); the sequence is FCKTLTASDT…QLLLGIRRAN (103 aa). The interval 571-649 is disordered; that stretch reads SVPNALSPFS…RPTAVPVPDP (79 aa). 2 stretches are compositionally biased toward low complexity: residues 576–594 and 604–620; these read LSPFSQLSSPSQSSPMTLQ and SYPDTSMSSLSPSNTST. Residues 786–870 enclose the PB1 domain; sequence ATFVKVYKSG…SCIKILSPQE (85 aa).

It belongs to the ARF family. In terms of assembly, homodimers and heterodimers. Expressed in roots, culms, leaves and young panicles.

It is found in the nucleus. Auxin response factors (ARFs) are transcriptional factors that bind specifically to the DNA sequence 5'-TGTCTC-3' found in the auxin-responsive promoter elements (AuxREs). The protein is Auxin response factor 17 (ARF17) of Oryza sativa subsp. japonica (Rice).